Reading from the N-terminus, the 88-residue chain is Small ribosomal subunit protein bS16c (88 aa).

It belongs to the bacterial ribosomal protein bS16 family.

It is found in the plastid. The protein localises to the chloroplast. The chain is Small ribosomal subunit protein bS16c from Calycanthus floridus var. glaucus (Eastern sweetshrub).